Consider the following 398-residue polypeptide: Acetate kinase 1 (398 aa).

Asn9 is a binding site for Mg(2+). Residue Lys16 coordinates ATP. Arg89 is a binding site for substrate. The Proton donor/acceptor role is filled by Asp146. ATP is bound by residues 206–210 (HLGNG), 281–283 (DCR), and 329–333 (GIGEN). Glu384 is a binding site for Mg(2+).

Belongs to the acetokinase family. In terms of assembly, homodimer. Mg(2+) is required as a cofactor. The cofactor is Mn(2+).

The protein resides in the cytoplasm. The enzyme catalyses acetate + ATP = acetyl phosphate + ADP. It functions in the pathway metabolic intermediate biosynthesis; acetyl-CoA biosynthesis; acetyl-CoA from acetate: step 1/2. Functionally, catalyzes the formation of acetyl phosphate from acetate and ATP. Can also catalyze the reverse reaction. This Vibrio vulnificus (strain CMCP6) protein is Acetate kinase 1.